Consider the following 236-residue polypeptide: UPF0173 metal-dependent hydrolase AZC_2841 (236 aa).

This sequence belongs to the UPF0173 family.

The polypeptide is UPF0173 metal-dependent hydrolase AZC_2841 (Azorhizobium caulinodans (strain ATCC 43989 / DSM 5975 / JCM 20966 / LMG 6465 / NBRC 14845 / NCIMB 13405 / ORS 571)).